Reading from the N-terminus, the 329-residue chain is MFRNHASRITAAAAPWVLRTACRQKSDAKTPVWGHTQLNRLSFLETVPVVPLRVSDESSEDRPTWSLPDIENVAITHKKPNGLVDTLAYRSVRTCRWLFDTFSLYRFGSITESKVISRCLFLETVAGVPGMVGGMLRHLSSLRYMTRDKGWINTLLVEAENERMHLMTFIELRQPGLPLRVSIIITQAIMYLFLLVAYVISPRFVHRFVGYLEEEAVITYTGVMRAIDEGRLRPTKNDVPEVARVYWNLSKNATFRDLINVIRADEAEHRVVNHTFADMHEKRLQNSVNPFVVLKKNPEEMYSNQPSGKTRTDFGSEGAKTASNVNKHV.

Residues 115-135 form a helical membrane-spanning segment; it reads VISRCLFLETVAGVPGMVGGM. Positions 123, 162, and 165 each coordinate Fe cation. The chain crosses the membrane as a helical span at residues 181–201; that stretch reads VSIIITQAIMYLFLLVAYVIS. Fe cation is bound by residues Glu213, Glu266, and His269. Residues 300 to 329 form a disordered region; that stretch reads EMYSNQPSGKTRTDFGSEGAKTASNVNKHV.

Belongs to the alternative oxidase family. Homodimer; disulfide-linked. It depends on Fe cation as a cofactor.

Its subcellular location is the mitochondrion inner membrane. Catalyzes cyanide-resistant oxygen consumption. May increase respiration when the cytochrome respiratory pathway is restricted, or in response to low temperatures. This Trypanosoma brucei brucei protein is Alternative oxidase, mitochondrial (AOX).